The chain runs to 141 residues: Hemoglobin subunit alpha (141 aa).

Positions 1–141 constitute a Globin domain; it reads VLSPADKTNV…VSTVLTSKYR (141 aa). Ser3 carries the post-translational modification Phosphoserine. Residue Lys7 is modified to N6-succinyllysine. A Phosphothreonine modification is found at Thr8. Lys11 carries the post-translational modification N6-succinyllysine. The residue at position 16 (Lys16) is an N6-acetyllysine; alternate. Lys16 is modified (N6-succinyllysine; alternate). At Tyr24 the chain carries Phosphotyrosine. Lys40 is subject to N6-succinyllysine. An O2-binding site is contributed by His58. His87 contributes to the heme b binding site. The residue at position 102 (Ser102) is a Phosphoserine. Phosphothreonine is present on Thr108. Residues Ser124 and Ser131 each carry the phosphoserine modification. Phosphothreonine occurs at positions 134 and 137. Phosphoserine is present on Ser138.

The protein belongs to the globin family. As to quaternary structure, heterotetramer of two alpha chains and two beta chains. Red blood cells.

Its function is as follows. Involved in oxygen transport from the lung to the various peripheral tissues. Functionally, hemopressin acts as an antagonist peptide of the cannabinoid receptor CNR1. Hemopressin-binding efficiently blocks cannabinoid receptor CNR1 and subsequent signaling. This is Hemoglobin subunit alpha (HBA) from Tursiops truncatus (Atlantic bottle-nosed dolphin).